We begin with the raw amino-acid sequence, 549 residues long: Glucose-6-phosphate isomerase (549 aa).

An N6-acetyllysine mark is found at Lys-80, Lys-228, and Lys-234. Glu-355 serves as the catalytic Proton donor. Catalysis depends on residues His-386 and Lys-514.

The protein belongs to the GPI family.

Its subcellular location is the cytoplasm. The enzyme catalyses alpha-D-glucose 6-phosphate = beta-D-fructose 6-phosphate. It participates in carbohydrate biosynthesis; gluconeogenesis. It functions in the pathway carbohydrate degradation; glycolysis; D-glyceraldehyde 3-phosphate and glycerone phosphate from D-glucose: step 2/4. Its function is as follows. Catalyzes the reversible isomerization of glucose-6-phosphate to fructose-6-phosphate. The chain is Glucose-6-phosphate isomerase from Shigella flexneri.